The chain runs to 138 residues: Large ribosomal subunit protein bL17 (138 aa).

It belongs to the bacterial ribosomal protein bL17 family. Part of the 50S ribosomal subunit. Contacts protein L32.

The chain is Large ribosomal subunit protein bL17 from Jannaschia sp. (strain CCS1).